A 339-amino-acid polypeptide reads, in one-letter code: Dihydroorotate dehydrogenase (quinone) (339 aa).

FMN-binding positions include alanine 64–lysine 68 and threonine 88. Lysine 68 provides a ligand contact to substrate. Substrate is bound at residue asparagine 113–phenylalanine 117. FMN-binding residues include asparagine 141 and asparagine 174. Asparagine 174 contributes to the substrate binding site. Residue serine 177 is the Nucleophile of the active site. Substrate is bound at residue asparagine 179. FMN is bound by residues lysine 219 and threonine 247. Asparagine 248 to threonine 249 provides a ligand contact to substrate. Residues glycine 270, glycine 299, and tyrosine 320–serine 321 each bind FMN.

This sequence belongs to the dihydroorotate dehydrogenase family. Type 2 subfamily. In terms of assembly, monomer. FMN is required as a cofactor.

The protein resides in the cell membrane. The enzyme catalyses (S)-dihydroorotate + a quinone = orotate + a quinol. The protein operates within pyrimidine metabolism; UMP biosynthesis via de novo pathway; orotate from (S)-dihydroorotate (quinone route): step 1/1. Functionally, catalyzes the conversion of dihydroorotate to orotate with quinone as electron acceptor. This chain is Dihydroorotate dehydrogenase (quinone), found in Haemophilus influenzae (strain 86-028NP).